The primary structure comprises 328 residues: MAMTAQVKAELASTQVTKTCCRKAEVASMLRFAGGLHIVSGRIVVEAEFDTGAAARRLRTNIAEVYGHQSDVVMVQGNGIRKGSRYIVRVVKDGEALARQTGLLDQRGRPVRGLPPAVVSGGGCDAVAAWRGAFLAHGSLTEPGRSSALEVTCPGPEAALALVGVARRLGIHAKAREVRGVDRVVIRDGDAIGQLLTRLGAHESLMAWEERRMRREVRATANRLANFDDANLRRSARAAVAAGARVDRAMEILGEEVPDHLRMAGQLRLEHKQASLEELGQLHDPVLTKDAIAGRIRRLLAMADKRAEELGIPDTESSLTPDMLADEG.

The H-T-H motif DNA-binding region spans 275 to 308 (SLEELGQLHDPVLTKDAIAGRIRRLLAMADKRAE).

This sequence belongs to the WhiA family.

Functionally, involved in cell division and chromosome segregation. This chain is Probable cell division protein WhiA, found in Nocardioides sp. (strain ATCC BAA-499 / JS614).